The sequence spans 524 residues: Peptide chain release factor 3 (524 aa).

The 267-residue stretch at 9 to 275 (QRRRTFAIIS…AVVELSPPPL (267 aa)) folds into the tr-type G domain. GTP contacts are provided by residues 18-25 (SHPDAGKT), 86-90 (DTPGH), and 140-143 (NKLD).

Belongs to the TRAFAC class translation factor GTPase superfamily. Classic translation factor GTPase family. PrfC subfamily.

The protein resides in the cytoplasm. In terms of biological role, increases the formation of ribosomal termination complexes and stimulates activities of RF-1 and RF-2. It binds guanine nucleotides and has strong preference for UGA stop codons. It may interact directly with the ribosome. The stimulation of RF-1 and RF-2 is significantly reduced by GTP and GDP, but not by GMP. This Methylobacillus flagellatus (strain ATCC 51484 / DSM 6875 / VKM B-1610 / KT) protein is Peptide chain release factor 3.